The following is a 703-amino-acid chain: DnaJ homolog subfamily C member 14 (703 aa).

The span at 1 to 11 (MAQKHPGERRL) shows a compositional bias: basic and acidic residues. A disordered region spans residues 1-229 (MAQKHPGERR…GRHRLARKRS (229 aa)). The span at 17–28 (SGGTSLSTSGSS) shows a compositional bias: low complexity. Pro residues predominate over residues 75 to 84 (HGPPRGPGPP). Residues 91–102 (DESETGSEESGV) show a composition bias toward acidic residues. Residues 121-133 (SFLSIPSACNCQG) are compositionally biased toward polar residues. Residues 163–176 (GEDEELEEEYDDEE) show a composition bias toward acidic residues. The segment covering 193-202 (PLSRRQKHRF) has biased composition (basic residues). The span at 203–218 (LIKEDVRDSGRREPKA) shows a compositional bias: basic and acidic residues. The segment covering 219–228 (PGRHRLARKR) has biased composition (basic residues). The next 2 helical transmembrane spans lie at 305 to 325 (MMFQ…IRIL) and 327 to 347 (VVGA…QLGW). The region spanning 444–508 (NPFHVLGVEA…ERRKEYEMKR (65 aa)) is the J domain. Disordered stretches follow at residues 622-643 (FGSR…PPAD) and 659-703 (MSNG…PFQR). A compositionally biased stretch (polar residues) spans 673–684 (GTTSTSRPNSSV). A compositionally biased stretch (basic residues) spans 691 to 703 (PKRRKKVRRPFQR).

As to quaternary structure, interacts with the FxxxFxxxF motif of DRD1 via its C-terminal domain.

Its subcellular location is the endoplasmic reticulum membrane. In terms of biological role, regulates the export of target proteins, such as DRD1, from the endoplasmic reticulum to the cell surface. The protein is DnaJ homolog subfamily C member 14 (Dnajc14) of Mus musculus (Mouse).